The primary structure comprises 400 residues: Probable peptidoglycan glycosyltransferase FtsW (400 aa).

The Cytoplasmic segment spans residues 1–29 (MVIERIKHLASPLQDWVFTPSPKVMFDRQ). Residues 30 to 50 (LIWIALGLMLTGLVMVASASF) form a helical membrane-spanning segment. The Periplasmic segment spans residues 51–60 (PISTRLTGQP). Residues 61 to 81 (FHFMMRHMLFVFLALSISSIV) form a helical membrane-spanning segment. Topologically, residues 82 to 95 (LRIELNKWLKYSSH) are cytoplasmic. The helical transmembrane segment at 96–116 (LLLISLLLLAAVLVVGKSVNG) threads the bilayer. At 117–122 (AARWLP) the chain is on the periplasmic side. Residues 123–143 (LGIFNLQPAEVAKLSLFVFIA) traverse the membrane as a helical segment. Residues 144-155 (GYLVRRHGEVRD) are Cytoplasmic-facing. The helical transmembrane segment at 156 to 176 (SFRGFVKPLLVLITLAFFLLM) threads the bilayer. At 177-178 (QP) the chain is on the periplasmic side. Residues 179–199 (DLGTTVVMFVTTIAMLFIAGA) form a helical membrane-spanning segment. Position 200 (lysine 200) is a topological domain, cytoplasmic. A helical membrane pass occupies residues 201-221 (LWQFIALVMGGISLVIVLILA). At 222 to 290 (EPYRMRRVTS…VFAVIAEELG (69 aa)) the chain is on the periplasmic side. The chain crosses the membrane as a helical span at residues 291–311 (FVGVCLVLCLIFALVFKALLI). Residues 312-321 (GRKCLAHDQR) are Cytoplasmic-facing. The helical transmembrane segment at 322-342 (FGGFLAFGIGIWFAFQTLVNV) threads the bilayer. Topologically, residues 343–356 (GAAAGIVPTKGLTL) are periplasmic. Residues 357–377 (PLISYGGSSLIIMSVAVSLLI) traverse the membrane as a helical segment. The Cytoplasmic segment spans residues 378–400 (RIDHECRVYLANEPPRSENEEQK).

Belongs to the SEDS family. FtsW subfamily.

The protein localises to the cell inner membrane. The catalysed reaction is [GlcNAc-(1-&gt;4)-Mur2Ac(oyl-L-Ala-gamma-D-Glu-L-Lys-D-Ala-D-Ala)](n)-di-trans,octa-cis-undecaprenyl diphosphate + beta-D-GlcNAc-(1-&gt;4)-Mur2Ac(oyl-L-Ala-gamma-D-Glu-L-Lys-D-Ala-D-Ala)-di-trans,octa-cis-undecaprenyl diphosphate = [GlcNAc-(1-&gt;4)-Mur2Ac(oyl-L-Ala-gamma-D-Glu-L-Lys-D-Ala-D-Ala)](n+1)-di-trans,octa-cis-undecaprenyl diphosphate + di-trans,octa-cis-undecaprenyl diphosphate + H(+). It functions in the pathway cell wall biogenesis; peptidoglycan biosynthesis. In terms of biological role, peptidoglycan polymerase that is essential for cell division. The sequence is that of Probable peptidoglycan glycosyltransferase FtsW from Aliivibrio salmonicida (strain LFI1238) (Vibrio salmonicida (strain LFI1238)).